A 96-amino-acid polypeptide reads, in one-letter code: Non-specific lipid-transfer protein 2G (96 aa).

The signal sequence occupies residues M1–A29. Cystine bridges form between C31–C63, C39–C53, C54–C89, and C65–C96.

It is found in the secreted. It localises to the cell wall. In terms of biological role, transfer lipids across membranes. May play a role in plant defense or in the biosynthesis of cuticle layers. In Triticum aestivum (Wheat), this protein is Non-specific lipid-transfer protein 2G.